The sequence spans 291 residues: Aliphatic sulfonates import ATP-binding protein SsuB 2 (291 aa).

Residues 26–247 (LRVRGIAKRY…APGLPALASI (222 aa)) form the ABC transporter domain. 58–65 (GRSGCGKS) provides a ligand contact to ATP. The disordered stretch occupies residues 264 to 291 (PAAPKAQTRHGPPRGATAQDTSPLQRIL). The span at 281–291 (AQDTSPLQRIL) shows a compositional bias: polar residues.

It belongs to the ABC transporter superfamily. Aliphatic sulfonates importer (TC 3.A.1.17.2) family. As to quaternary structure, the complex is composed of two ATP-binding proteins (SsuB), two transmembrane proteins (SsuC) and a solute-binding protein (SsuA).

It localises to the cell inner membrane. It carries out the reaction ATP + H2O + aliphatic sulfonate-[sulfonate-binding protein]Side 1 = ADP + phosphate + aliphatic sulfonateSide 2 + [sulfonate-binding protein]Side 1.. Functionally, part of the ABC transporter complex SsuABC involved in aliphatic sulfonates import. Responsible for energy coupling to the transport system. This is Aliphatic sulfonates import ATP-binding protein SsuB 2 from Xanthomonas axonopodis pv. citri (strain 306).